Here is an 88-residue protein sequence, read N- to C-terminus: uncharacterized protein (88 aa).

The interval Met-1–Thr-31 is disordered.

This is an uncharacterized protein from Escherichia coli.